Consider the following 866-residue polypeptide: Probable outer membrane usher protein ElfC (866 aa).

The first 35 residues, 1–35 (MYRTHRQHSLLSSGGVPSFIGGLVVFVSAAFNAQA), serve as a signal peptide directing secretion.

It belongs to the fimbrial export usher family.

The protein resides in the cell outer membrane. Functionally, part of the elfADCG fimbrial operon, which could be required for adherence to host epithelial cells. Could be involved in the export and assembly of the ElfA fimbrial subunits across the outer membrane. This is Probable outer membrane usher protein ElfC (elfC) from Escherichia coli O157:H7.